Reading from the N-terminus, the 427-residue chain is 3-phosphoshikimate 1-carboxyvinyltransferase (427 aa).

3-phosphoshikimate-binding residues include Lys-20, Ser-21, and Arg-25. Phosphoenolpyruvate is bound at residue Lys-20. Phosphoenolpyruvate is bound by residues Gly-92 and Arg-120. Ser-166, Gln-168, Asp-312, and Lys-339 together coordinate 3-phosphoshikimate. Gln-168 is a phosphoenolpyruvate binding site. Residue Asp-312 is the Proton acceptor of the active site. Phosphoenolpyruvate is bound by residues Arg-343 and Arg-385.

This sequence belongs to the EPSP synthase family. Monomer.

It is found in the cytoplasm. It catalyses the reaction 3-phosphoshikimate + phosphoenolpyruvate = 5-O-(1-carboxyvinyl)-3-phosphoshikimate + phosphate. The protein operates within metabolic intermediate biosynthesis; chorismate biosynthesis; chorismate from D-erythrose 4-phosphate and phosphoenolpyruvate: step 6/7. Its function is as follows. Catalyzes the transfer of the enolpyruvyl moiety of phosphoenolpyruvate (PEP) to the 5-hydroxyl of shikimate-3-phosphate (S3P) to produce enolpyruvyl shikimate-3-phosphate and inorganic phosphate. This is 3-phosphoshikimate 1-carboxyvinyltransferase from Streptococcus sanguinis (strain SK36).